Here is a 570-residue protein sequence, read N- to C-terminus: Frizzled-2 (570 aa).

Residues 1–28 (MRARSALPRSALPRLLLPLLLLPAAGPA) form the signal peptide. Residues 29 to 252 (QFHGEKGISI…QEETRFARLW (224 aa)) are Extracellular-facing. The FZ domain maps to 39–158 (PDHGFCQPIS…HGAEQICVGQ (120 aa)). Disulfide bonds link Cys-44-Cys-105, Cys-52-Cys-98, Cys-89-Cys-126, Cys-115-Cys-155, and Cys-119-Cys-143. N-linked (GlcNAc...) asparagine glycosylation is present at Asn-58. A glycan (N-linked (GlcNAc...) asparagine) is linked at Asn-159. Residues 166 to 194 (PALLTTAPPSGLQPGAGGTPGGPGGGGSP) are disordered. Residues 179 to 193 (PGAGGTPGGPGGGGS) are compositionally biased toward gly residues. Residues 253–273 (ILTWSVLCCASTFFTVTTYLV) form a helical membrane-spanning segment. The Cytoplasmic segment spans residues 274-284 (DMQRFRYPERP). The chain crosses the membrane as a helical span at residues 285–305 (IIFLSGCYTMVSVAYIAGFVL). Topologically, residues 306–332 (QERVVCNERFSEDGYRTVVQGTKKEGC) are extracellular. Residues 333–353 (TILFMMLYFFSMASSIWWVIL) traverse the membrane as a helical segment. The Cytoplasmic portion of the chain corresponds to 354–375 (SLTWFLAAGMKWGHEAIEANSQ). A helical membrane pass occupies residues 376–396 (YFHLAAWAVPAVKTITILAMG). The Extracellular segment spans residues 397-419 (QIDGDLLSGVCFVGLNSLDPLRG). Residues 420-440 (FVLAPLFVYLFIGTSFLLAGF) traverse the membrane as a helical segment. Residues 441–466 (VSLFRIRTIMKHDGTKTEKLERLMVR) are Cytoplasmic-facing. A helical membrane pass occupies residues 467-487 (IGVFSVLYTVPATIVIACYFY). At 488 to 524 (EQAFREHWERSWVSQHCKSLAIPCPAHYTPRMSPDFT) the chain is on the extracellular side. A helical membrane pass occupies residues 525–545 (VYMIKYLMTLIVGITSGFWIW). Over 546–570 (SGKTLHSWRKFYTRLTNSRHGETTV) the chain is Cytoplasmic. A Lys-Thr-X-X-X-Trp motif, mediates interaction with the PDZ domain of Dvl family members motif is present at residues 548-553 (KTLHSW). The PDZ-binding signature appears at 568 to 570 (TTV).

Belongs to the G-protein coupled receptor Fz/Smo family. Ubiquitinated by ZNRF3, leading to its degradation by the proteasome. As to expression, expressed in embryonic and adult heart, lung, chondrocytes and brain. Also expressed in the developing gastrointestinal tract (strongest in foregut), much weaker expression in the adult. No expression in fetal liver and adult spleen. Up-regulated in esophageal squamous cell carcinomas.

It localises to the membrane. It is found in the cell membrane. Receptor for Wnt proteins. Most of frizzled receptors are coupled to the beta-catenin canonical signaling pathway, which leads to the activation of disheveled proteins, inhibition of GSK-3 kinase, nuclear accumulation of beta-catenin and activation of Wnt target genes. A second signaling pathway involving PKC and calcium fluxes has been seen for some family members, but it is not yet clear if it represents a distinct pathway or if it can be integrated in the canonical pathway, as PKC seems to be required for Wnt-mediated inactivation of GSK-3 kinase. Both pathways seem to involve interactions with G-proteins. May be involved in transduction and intercellular transmission of polarity information during tissue morphogenesis and/or in differentiated tissues. The sequence is that of Frizzled-2 (Fzd2) from Mus musculus (Mouse).